A 441-amino-acid polypeptide reads, in one-letter code: Tol-Pal system protein TolB (441 aa).

A signal peptide spans 1-39; it reads MPTMTPAFSRASLSEALRSYGLALLLFLATLLAWQPAHA.

This sequence belongs to the TolB family. The Tol-Pal system is composed of five core proteins: the inner membrane proteins TolA, TolQ and TolR, the periplasmic protein TolB and the outer membrane protein Pal. They form a network linking the inner and outer membranes and the peptidoglycan layer.

It localises to the periplasm. Functionally, part of the Tol-Pal system, which plays a role in outer membrane invagination during cell division and is important for maintaining outer membrane integrity. This chain is Tol-Pal system protein TolB, found in Bordetella avium (strain 197N).